A 229-amino-acid chain; its full sequence is Small ribosomal subunit protein uS2c (229 aa).

It belongs to the universal ribosomal protein uS2 family.

The protein resides in the plastid. It localises to the chloroplast. In Trieres chinensis (Marine centric diatom), this protein is Small ribosomal subunit protein uS2c (rps2).